Consider the following 114-residue polypeptide: MSPWEAKWIRHSDVRPFPQPEPMTVEEKVAVMLKPELHLSSGCHPYPAVNDLGETNGGLKTTGAPSGMCKGSGWGSQFTVDTHHLEASGPSCTRGTFQKTCRRHTSGIATTGST.

It belongs to the Necrosis inducing protein (NPP1) family.

It localises to the secreted. The protein resides in the host cytoplasm. Functionally, probable secreted effector that may act as a pathogen-associated molecular pattern (PAMP) recognized by the plant immune system. Seems not to induce necrosis, neither in several susceptible or resistant Vitis species nor in the dicot model plant Nicotiana benthamiana. This chain is NLP effector protein 1, found in Plasmopara viticola (Downy mildew of grapevine).